The sequence spans 142 residues: Transcriptional regulator MraZ (142 aa).

2 consecutive SpoVT-AbrB domains span residues 5–51 (ASAL…PRPE) and 77–120 (AMDV…DAQT).

Belongs to the MraZ family. In terms of assembly, forms oligomers.

It localises to the cytoplasm. The protein localises to the nucleoid. The polypeptide is Transcriptional regulator MraZ (Paraburkholderia xenovorans (strain LB400)).